The primary structure comprises 700 residues: Pentatricopeptide repeat-containing protein At3g26540 (700 aa).

PPR repeat units follow at residues 95–125 (PIFL…MPER), 126–160 (DGGS…GVRA), 161–195 (TETS…GYSG), 196–226 (NVDL…IVNP), 227–261 (SDVS…NVRP), 262–296 (LNHT…SVVA), 297–327 (DTVV…TRSK), 328–362 (DLKS…NIVS), 363–389 (WNAM…MRQE), 394–428 (DNVT…GYDT), 429–459 (NVIV…MSEL), 461–495 (DEVS…AKPS), 497–529 (YTLA…GYKI), 530–560 (DVVI…AATR), 561–595 (DLIL…GVKP), 596–626 (DHVT…MSTK), and 632–662 (QVEH…MPFD).

Belongs to the PPR family. PCMP-A subfamily.

In Arabidopsis thaliana (Mouse-ear cress), this protein is Pentatricopeptide repeat-containing protein At3g26540 (PCMP-A5).